Reading from the N-terminus, the 144-residue chain is Large ribosomal subunit protein uL15 (144 aa).

A disordered region spans residues 1–52 (MYLNTISPMKKSNHSSKRKGRGIGSGKGKTSGRGHKGQRSRSGGKVRRGFEG). 2 stretches are compositionally biased toward basic residues: residues 11 to 21 (KSNHSSKRKGR) and 30 to 47 (TSGR…GKVR).

Belongs to the universal ribosomal protein uL15 family. Part of the 50S ribosomal subunit.

Functionally, binds to the 23S rRNA. In Wigglesworthia glossinidia brevipalpis, this protein is Large ribosomal subunit protein uL15.